Consider the following 121-residue polypeptide: Large ribosomal subunit protein bL19 (121 aa).

Belongs to the bacterial ribosomal protein bL19 family.

Its function is as follows. This protein is located at the 30S-50S ribosomal subunit interface and may play a role in the structure and function of the aminoacyl-tRNA binding site. This chain is Large ribosomal subunit protein bL19, found in Neisseria meningitidis serogroup C (strain 053442).